The sequence spans 241 residues: Probable transcriptional regulatory protein lmo1535 (241 aa).

Residues 1–14 (MSGHSKWNNIQGRK) show a composition bias toward polar residues. Residues 1 to 22 (MSGHSKWNNIQGRKNAQDSKRS) are disordered.

It belongs to the TACO1 family.

It localises to the cytoplasm. The sequence is that of Probable transcriptional regulatory protein lmo1535 from Listeria monocytogenes serovar 1/2a (strain ATCC BAA-679 / EGD-e).